The sequence spans 703 residues: Peptide transporter CstA (703 aa).

The next 16 helical transmembrane spans lie at 6–26 (TKIL…YLAL), 29–49 (GESV…MIGY), 87–107 (VLFG…GPIL), 118–138 (LWIL…VLFI), 162–182 (VAMV…AMVV), 190–210 (PWGL…GIYM), 221–241 (ASII…VIAA), 256–276 (LAIV…WFLL), 282–302 (LSTF…VLVA), 319–339 (GPVF…CGAI), 374–394 (AVAI…YFAI), 463–483 (LMAF…LTAV), 514–534 (GLLA…QGAI), 547–567 (FGVS…TILV), 574–594 (YTWV…YGGI), and 660–680 (AILC…CIGI).

Belongs to the peptide transporter carbon starvation (CstA) (TC 2.A.114) family.

The protein localises to the cell inner membrane. Involved in the uptake of dipeptides and tripeptides. May influence host-pathogen interactions. Involved in motility and agglutination, and has a role in stimulation of dendritic cells. The chain is Peptide transporter CstA from Campylobacter jejuni subsp. jejuni serotype O:2 (strain ATCC 700819 / NCTC 11168).